The sequence spans 603 residues: Rab proteins geranylgeranyltransferase component A (603 aa).

Ser-470 is subject to Phosphoserine.

It belongs to the Rab GDI family.

Its function is as follows. Substrate-binding subunit (component A) of the Rab geranylgeranyltransferase (GGTase) complex. Binds unprenylated Rab proteins and presents the substrate peptide to the catalytic component B. The component A is thought to be regenerated by transferring its prenylated Rab back to the donor membrane. The sequence is that of Rab proteins geranylgeranyltransferase component A (MRS6) from Saccharomyces cerevisiae (strain ATCC 204508 / S288c) (Baker's yeast).